The following is a 23-amino-acid chain: Septenin 2b (23 aa).

In terms of tissue distribution, expressed in skin glands.

Its subcellular location is the secreted. Functionally, may act as an antimicrobial peptide. The protein is Septenin 2b of Osteopilus septentrionalis (Cuban treefrog).